We begin with the raw amino-acid sequence, 496 residues long: Autophagy-related protein 21 (496 aa).

The WD 1 repeat unit spans residues 1-35 (MKVLQFNQDATCCVVAASSHQISIFNCDPFGKCFE). The segment at 41-86 (SKKKTSNNNGTASNSESRNNEESILITNGSRDRTDAEEEEDNEDNA) is disordered. The span at 46–57 (SNNNGTASNSES) shows a compositional bias: low complexity. Residues 75-84 (DAEEEEDNED) show a composition bias toward acidic residues. Residues 148 to 190 (VMNRKRMCVLLESDQIFIYDISCMKPLETIDLWEDHYKRSQAN) form a WD 2 repeat. The residue at position 213 (threonine 213) is a Phosphothreonine. The residue at position 237 (serine 237) is a Phosphoserine. WD repeat units follow at residues 294 to 334 (VHKG…DYMS), 346 to 385 (TRLC…NSLP), and 448 to 488 (VNES…GECV). Positions 342–346 (FRRGT) match the L/FRRG motif motif.

The protein belongs to the WD repeat PROPPIN family.

The protein resides in the cytoplasm. It is found in the vacuole membrane. Required for cytoplasm to vacuole transport (Cvt) vesicles formation and mitophagy. Involved in binding of phosphatidylethanolamine to ATG8 and in recruitment of ATG8 and ATG5 to the pre-autophagosomal structure. Protects ATG8 from ARG4-mediated cleavage. Essential for maturation of proaminopeptidase I. The polypeptide is Autophagy-related protein 21 (ATG21) (Saccharomyces cerevisiae (strain YJM789) (Baker's yeast)).